The primary structure comprises 209 residues: Claudin-like protein ZF-A9 (209 aa).

4 consecutive transmembrane segments (helical) span residues leucine 8–leucine 28, alanine 81–glycine 101, alanine 114–proline 134, and phenylalanine 159–leucine 179. The disordered stretch occupies residues glycine 187–valine 209. Residues arginine 188–asparagine 201 are compositionally biased toward polar residues.

The protein belongs to the claudin family.

It is found in the cell membrane. The protein localises to the cell junction. It localises to the tight junction. Functionally, component of tight junction (TJ) strands. The polypeptide is Claudin-like protein ZF-A9 (cldng) (Danio rerio (Zebrafish)).